The primary structure comprises 146 residues: Large ribosomal subunit protein uL15 (146 aa).

The disordered stretch occupies residues 1-57 (MDLSNLKAAEGSVHSDNFRRGRGHGSGNGKTAGKGHKGQKARSGAPRPGFEGGQMPL).

It belongs to the universal ribosomal protein uL15 family. In terms of assembly, part of the 50S ribosomal subunit.

Its function is as follows. Binds to the 23S rRNA. The protein is Large ribosomal subunit protein uL15 of Agathobacter rectalis (strain ATCC 33656 / DSM 3377 / JCM 17463 / KCTC 5835 / VPI 0990) (Eubacterium rectale).